The sequence spans 140 residues: UPF0102 protein ACIAD1132 (140 aa).

It belongs to the UPF0102 family.

The sequence is that of UPF0102 protein ACIAD1132 from Acinetobacter baylyi (strain ATCC 33305 / BD413 / ADP1).